The primary structure comprises 120 residues: U3-hexatoxin-Hi1a (120 aa).

A signal peptide spans 1–19; that stretch reads MKLLYFFVVITVLVAVAAA. The propeptide occupies 20–51; the sequence is LPAKTEEQIAAEENQLVEDLVQYAGTRLTRKR.

This sequence belongs to the neurotoxin 25 family. F7 subfamily. Contains 4 disulfide bonds. In terms of tissue distribution, expressed by the venom gland.

Its subcellular location is the secreted. Its function is as follows. Weak insecticidal toxin with probable ion channel impairing activity. In vivo, induces paralysis when injected into sheep blowflies (L.cuprina). Shows weak toxicity, since it is only toxic at high doses, and flies recover within 24 hours. This chain is U3-hexatoxin-Hi1a, found in Hadronyche infensa (Fraser island funnel-web spider).